A 305-amino-acid chain; its full sequence is ATP synthase gamma chain (305 aa).

Belongs to the ATPase gamma chain family. As to quaternary structure, F-type ATPases have 2 components, CF(1) - the catalytic core - and CF(0) - the membrane proton channel. CF(1) has five subunits: alpha(3), beta(3), gamma(1), delta(1), epsilon(1). CF(0) has three main subunits: a, b and c.

Its subcellular location is the cell membrane. In terms of biological role, produces ATP from ADP in the presence of a proton gradient across the membrane. The gamma chain is believed to be important in regulating ATPase activity and the flow of protons through the CF(0) complex. This Streptomyces griseus subsp. griseus (strain JCM 4626 / CBS 651.72 / NBRC 13350 / KCC S-0626 / ISP 5235) protein is ATP synthase gamma chain.